A 269-amino-acid polypeptide reads, in one-letter code: Glutamate racemase (269 aa).

Substrate-binding positions include 11–12 (DS) and 43–44 (YG). The active-site Proton donor/acceptor is Cys-74. Substrate is bound at residue 75 to 76 (NT). Cys-185 (proton donor/acceptor) is an active-site residue. 186–187 (TH) provides a ligand contact to substrate.

Belongs to the aspartate/glutamate racemases family.

The catalysed reaction is L-glutamate = D-glutamate. It functions in the pathway cell wall biogenesis; peptidoglycan biosynthesis. Functionally, provides the (R)-glutamate required for cell wall biosynthesis. The protein is Glutamate racemase of Bacillus cereus (strain ATCC 10987 / NRS 248).